The following is a 312-amino-acid chain: Fe-S cluster assembly protein DRE2 (312 aa).

Residues 7 to 139 (LSDVPRVLLL…VKPVFEEQSV (133 aa)) form an N-terminal SAM-like domain region. The segment at 140 to 204 (LLPFSINRSQ…EDELINEDEL (65 aa)) is linker. 4 residues coordinate [2Fe-2S] cluster: Cys-214, Cys-225, Cys-228, and Cys-230. The fe-S binding site A stretch occupies residues 214-230 (CRPKAGKRRRACKDCTC). Cys-275, Cys-278, Cys-286, and Cys-289 together coordinate [4Fe-4S] cluster. 2 consecutive short sequence motifs (cx2C motif) follow at residues 275–278 (CGNC) and 286–289 (CDGC). The tract at residues 275-289 (CGNCSLGDAFRCDGC) is fe-S binding site B.

It belongs to the anamorsin family. As to quaternary structure, monomer. Interacts with TAH18. Interacts with MIA40. [2Fe-2S] cluster is required as a cofactor. It depends on [4Fe-4S] cluster as a cofactor.

The protein resides in the cytoplasm. It is found in the mitochondrion intermembrane space. Its function is as follows. Component of the cytosolic iron-sulfur (Fe-S) protein assembly (CIA) machinery required for the maturation of extramitochondrial Fe-S proteins. Part of an electron transfer chain functioning in an early step of cytosolic Fe-S biogenesis, facilitating the de novo assembly of a [4Fe-4S] cluster on the scaffold complex CFD1-NBP35. Electrons are transferred to DRE2 from NADPH via the FAD- and FMN-containing protein TAH18. TAH18-DRE2 are also required for the assembly of the diferric tyrosyl radical cofactor of ribonucleotide reductase (RNR), probably by providing electrons for reduction during radical cofactor maturation in the catalytic small subunit RNR2. This Arthroderma otae (strain ATCC MYA-4605 / CBS 113480) (Microsporum canis) protein is Fe-S cluster assembly protein DRE2.